The following is a 309-amino-acid chain: Porphobilinogen deaminase (309 aa).

Residue Cys243 is modified to S-(dipyrrolylmethanemethyl)cysteine.

The protein belongs to the HMBS family. Monomer. Dipyrromethane is required as a cofactor.

It carries out the reaction 4 porphobilinogen + H2O = hydroxymethylbilane + 4 NH4(+). Its pathway is porphyrin-containing compound metabolism; protoporphyrin-IX biosynthesis; coproporphyrinogen-III from 5-aminolevulinate: step 2/4. In terms of biological role, tetrapolymerization of the monopyrrole PBG into the hydroxymethylbilane pre-uroporphyrinogen in several discrete steps. The protein is Porphobilinogen deaminase of Deinococcus geothermalis (strain DSM 11300 / CIP 105573 / AG-3a).